A 160-amino-acid polypeptide reads, in one-letter code: SsrA-binding protein (160 aa).

Positions 137–153 are enriched in basic and acidic residues; the sequence is DKRDDIKTREWKQDKAR. The interval 137 to 160 is disordered; the sequence is DKRDDIKTREWKQDKARIMKNANR.

The protein belongs to the SmpB family.

The protein localises to the cytoplasm. Functionally, required for rescue of stalled ribosomes mediated by trans-translation. Binds to transfer-messenger RNA (tmRNA), required for stable association of tmRNA with ribosomes. tmRNA and SmpB together mimic tRNA shape, replacing the anticodon stem-loop with SmpB. tmRNA is encoded by the ssrA gene; the 2 termini fold to resemble tRNA(Ala) and it encodes a 'tag peptide', a short internal open reading frame. During trans-translation Ala-aminoacylated tmRNA acts like a tRNA, entering the A-site of stalled ribosomes, displacing the stalled mRNA. The ribosome then switches to translate the ORF on the tmRNA; the nascent peptide is terminated with the 'tag peptide' encoded by the tmRNA and targeted for degradation. The ribosome is freed to recommence translation, which seems to be the essential function of trans-translation. This chain is SsrA-binding protein, found in Edwardsiella ictaluri (strain 93-146).